The following is a 620-amino-acid chain: MDSHTLIQALIYLGSAALIVPIAVRLGLGSVLGYLIAGCIIGPWGLRLVTDAESILHFAEIGVVLMLFIIGLELDPQRLWKLRAAVFGGGALQMVICGGLLGLFCMLLGLRWQVAELIGMTLALSSTAIAMQAMNERNLMMTQMGRSAFAVLLFQDIAAIPLVAMIPLLAASSASTTMGAFALSALKVAGALVLVVLLGRYVTRPALRFVARSGLREVFSAVALFLVFGFGLLLEEVGLSMAMGAFLAGVLLASSEYRHALESDIEPFKGLLLGLFFIGVGMSIDFGTLIENPLRIVILLLGFLIIKIAMLWLIARPLQVPNKQRRWFAVLLGQGSEFAFVVFGAAQMANVLEPEWAKSLTLAVALSMAATPILLVILNRLEQSSSEEAREADEIDEEQPRVIIAGFGRFGQITGRLLLSSGVKMVVLDHDPDHIETLRKFGMKVFYGDATRMDLLESAGAAKAEVLINAIDDPQTNLQLTEMVKEHFPHLQIIARARDVDHYIRLRQAGVEKPERETFEGALKTGRLALESLGLGPYEARERADVFRRFNIQMVEEMAMVENDTKARAAVYKRTSAMLSEIITEDREHLSLIQRHGWQGTEEGKHTGNMADEPETKPSS.

Helical transmembrane passes span 4 to 24 (HTLI…PIAV), 26 to 46 (LGLG…PWGL), 54 to 74 (SILH…GLEL), 90 to 110 (GALQ…LLGL), 114 to 134 (VAEL…MQAM), 149 to 169 (FAVL…IPLL), 178 to 198 (MGAF…VVLL), 218 to 238 (VFSA…EEVG), 270 to 290 (GLLL…GTLI), 294 to 314 (LRIV…LWLI), 327 to 347 (WFAV…GAAQ), and 359 to 379 (SLTL…VILN). The RCK N-terminal domain occupies 399 to 518 (QPRVIIAGFG…AGVEKPERET (120 aa)). The disordered stretch occupies residues 597–620 (GWQGTEEGKHTGNMADEPETKPSS).

The protein belongs to the monovalent cation:proton antiporter 2 (CPA2) transporter (TC 2.A.37) family. KefC subfamily. Homodimer. Interacts with the regulatory subunit KefF.

The protein resides in the cell inner membrane. Its function is as follows. Pore-forming subunit of a potassium efflux system that confers protection against electrophiles. Catalyzes K(+)/H(+) antiport. This is Glutathione-regulated potassium-efflux system protein KefC from Escherichia coli O17:K52:H18 (strain UMN026 / ExPEC).